We begin with the raw amino-acid sequence, 247 residues long: 14-3-3 protein gamma-B (247 aa).

The protein belongs to the 14-3-3 family. As to quaternary structure, homodimer, and heterodimer with other family members.

The protein resides in the cytoplasm. Functionally, adapter protein implicated in the regulation of a large spectrum of both general and specialized signaling pathways. Binds to a large number of partners, usually by recognition of a phosphoserine or phosphothreonine motif. Binding generally results in the modulation of the activity of the binding partner. The polypeptide is 14-3-3 protein gamma-B (ywhag-b) (Xenopus laevis (African clawed frog)).